The sequence spans 226 residues: Nucleoside triphosphate pyrophosphatase (226 aa).

The active-site Proton acceptor is Asp79. The disordered stretch occupies residues 204–226 (WSRGTSTHPTPGTSATPKPNPGA). Positions 206–220 (RGTSTHPTPGTSATP) are enriched in polar residues.

It belongs to the Maf family. A divalent metal cation is required as a cofactor.

It is found in the cytoplasm. The enzyme catalyses a ribonucleoside 5'-triphosphate + H2O = a ribonucleoside 5'-phosphate + diphosphate + H(+). It carries out the reaction a 2'-deoxyribonucleoside 5'-triphosphate + H2O = a 2'-deoxyribonucleoside 5'-phosphate + diphosphate + H(+). Its function is as follows. Nucleoside triphosphate pyrophosphatase. May have a dual role in cell division arrest and in preventing the incorporation of modified nucleotides into cellular nucleic acids. In Salinispora tropica (strain ATCC BAA-916 / DSM 44818 / JCM 13857 / NBRC 105044 / CNB-440), this protein is Nucleoside triphosphate pyrophosphatase.